A 325-amino-acid polypeptide reads, in one-letter code: Tetraacyldisaccharide 4'-kinase (325 aa).

Residue 55-62 coordinates ATP; it reads TAGGNGKT.

Belongs to the LpxK family.

It carries out the reaction a lipid A disaccharide + ATP = a lipid IVA + ADP + H(+). It participates in glycolipid biosynthesis; lipid IV(A) biosynthesis; lipid IV(A) from (3R)-3-hydroxytetradecanoyl-[acyl-carrier-protein] and UDP-N-acetyl-alpha-D-glucosamine: step 6/6. Functionally, transfers the gamma-phosphate of ATP to the 4'-position of a tetraacyldisaccharide 1-phosphate intermediate (termed DS-1-P) to form tetraacyldisaccharide 1,4'-bis-phosphate (lipid IVA). The polypeptide is Tetraacyldisaccharide 4'-kinase (Enterobacter sp. (strain 638)).